Reading from the N-terminus, the 100-residue chain is Urease subunit gamma (100 aa).

This sequence belongs to the urease gamma subunit family. As to quaternary structure, heterotrimer of UreA (gamma), UreB (beta) and UreC (alpha) subunits. Three heterotrimers associate to form the active enzyme.

Its subcellular location is the cytoplasm. The catalysed reaction is urea + 2 H2O + H(+) = hydrogencarbonate + 2 NH4(+). The protein operates within nitrogen metabolism; urea degradation; CO(2) and NH(3) from urea (urease route): step 1/1. This chain is Urease subunit gamma, found in Enterobacter sp. (strain 638).